A 434-amino-acid chain; its full sequence is Epimerase FSL3 (434 aa).

Residue 125–126 participates in substrate binding; that stretch reads GF. Glutamate 392 functions as the Proton acceptor in the catalytic mechanism.

Belongs to the aldose epimerase family. As to quaternary structure, monomer.

It functions in the pathway secondary metabolite biosynthesis. Its function is as follows. Epimerase; part of the gene cluster that mediates the biosynthesis of fusarielins F, G and H, decaketide compounds with 5 methylations and a decaline core that act as mycoestrogens as they stimulate growth of MCF-7 breast cancer cells. The initial compound in the pathway is produced by the reducing polyketide synthase FSL1. FSL1 lacks an active enoyl reductase (ER) domain and biosynthesis of fusarielins relies on the trans-acting enoyl reductase FSL5, before it is released through hydrolysis catalyzed by the thioesterase FSL2. Fusarielins F, G, and H have a C11=C12 cis double bond and is fully reduced between C10 and C11 and between C12 and C13. FSL3 can be involved in the formation of the C11=C12 cis double bond by moving a hypothetical C10=C11 or C12=C13 trans double bond to form prefusarielin. Prefusarielin is oxygenated at C15 and C16 by the cytochrome P450 monooxygenase FSL4, resulting in fusarielin F, which subsequently is epoxidized into fusarielin G by the same enzyme. The final step in the pathway is a reduction of the carboxylic acid moiety to yield fusarielin H via a still undetermined mechanism. The protein is Epimerase FSL3 of Gibberella zeae (strain ATCC MYA-4620 / CBS 123657 / FGSC 9075 / NRRL 31084 / PH-1) (Wheat head blight fungus).